Here is an 814-residue protein sequence, read N- to C-terminus: Echinoderm microtubule-associated protein-like 1 (814 aa).

Residues 31–72 (SMEVSDRIASLEQRVQMQEDDIQLLKSALADVVRRLNITEEQ) adopt a coiled-coil conformation. The segment at 77–180 (NRKGPTKARP…ESKPKEPAFS (104 aa)) is disordered. Over residues 92–101 (PLRTTVNNGT) the composition is skewed to polar residues. Low complexity predominate over residues 103–115 (LPKKPSASLPAPS). Over residues 127–137 (KSINRTSSSER) the composition is skewed to polar residues. Basic and acidic residues predominate over residues 142-152 (GRRESSGDSKG). The span at 155–167 (NRTGSTSSSSSGK) shows a compositional bias: low complexity. The interval 175-814 (KEPAFSPEEG…DTSIMQWRVI (640 aa)) is tandem atypical propeller in EMLs. 12 WD repeats span residues 260-309 (EQLQ…IWDS), 314-357 (TLHV…VWDW), 362-399 (RLAD…FWTL), 408-445 (QGLF…VWGK), 449-488 (RISY…SWNG), 492-529 (KLHK…LQGT), 534-571 (FTPI…LWDA), 577-612 (VWDK…VFDT), 616-654 (DLVT…IYGV), 663-700 (RVGK…YWVP), 708-767 (SVET…LFSY), and 774-813 (APSH…QWRV).

This sequence belongs to the WD repeat EMAP family. In terms of assembly, homotrimer; self-association is mediated by the N-terminal coiled coil. Does not interact with EML3. Binds unpolymerized tubulins via its WD repeat region. Binds repolymerizing microtubules. Interacts with TASOR. Detected in adult brain cortex, hippocampus and thalamus. Expressed in the stomach, lungs and in Sertoli cells of the testis.

The protein localises to the cytoplasm. Its subcellular location is the perinuclear region. It is found in the cytoskeleton. In terms of biological role, modulates the assembly and organization of the microtubule cytoskeleton, and probably plays a role in regulating the orientation of the mitotic spindle and the orientation of the plane of cell division. Required for normal proliferation of neuronal progenitor cells in the developing brain and for normal brain development. Does not affect neuron migration per se. The protein is Echinoderm microtubule-associated protein-like 1 (Eml1) of Mus musculus (Mouse).